Reading from the N-terminus, the 159-residue chain is Ribosomal RNA large subunit methyltransferase H (159 aa).

Residues leucine 76, glycine 107, and 126 to 131 contribute to the S-adenosyl-L-methionine site; that span reads LSSLTL.

Belongs to the RNA methyltransferase RlmH family. In terms of assembly, homodimer.

It localises to the cytoplasm. It catalyses the reaction pseudouridine(1915) in 23S rRNA + S-adenosyl-L-methionine = N(3)-methylpseudouridine(1915) in 23S rRNA + S-adenosyl-L-homocysteine + H(+). In terms of biological role, specifically methylates the pseudouridine at position 1915 (m3Psi1915) in 23S rRNA. In Cupriavidus necator (strain ATCC 17699 / DSM 428 / KCTC 22496 / NCIMB 10442 / H16 / Stanier 337) (Ralstonia eutropha), this protein is Ribosomal RNA large subunit methyltransferase H.